A 153-amino-acid polypeptide reads, in one-letter code: Ribosome maturation factor RimP (153 aa).

The protein belongs to the RimP family.

Its subcellular location is the cytoplasm. Functionally, required for maturation of 30S ribosomal subunits. The chain is Ribosome maturation factor RimP from Clostridium botulinum (strain ATCC 19397 / Type A).